Reading from the N-terminus, the 4960-residue chain is Malformin synthetase mlfA (4960 aa).

An adenylation 1 region spans residues 194 to 564 (ERHATNRPHS…CGRADTQVKL (371 aa)). The region spanning 705–778 (SRLEQEVQLA…EAASLAEVQE (74 aa)) is the Carrier 1 domain. Ser-739 carries the O-(pantetheine 4'-phosphoryl)serine modification. The interval 816–1247 (EDVFPCTTMQ…ALNTLSLLQA (432 aa)) is condensation 1. The tract at residues 1275-1650 (DRWVTRQPEG…GRKDTQVKLR (376 aa)) is adenylation 2. One can recognise a Carrier 2 domain in the interval 1777–1854 (TPASELERTL…HLAAEVGEPA (78 aa)). Disordered regions lie at residues 1855 to 1883 (GQSA…NDGV) and 1917 to 1943 (GGSS…KKNA). Composition is skewed to low complexity over residues 1857-1881 (SASS…STND) and 1919-1936 (SSSN…SSSS). A condensation 2 region spans residues 1989–2404 (EDIYPATALQ…AVSCSDKETL (416 aa)). Residues 2427-2819 (RRTPHAPAVC…IGRRDGQLKL (393 aa)) are adenylation 3. The region spanning 2955 to 3031 (RPVTSQEREM…QLICHINTIR (77 aa)) is the Carrier 3 domain. At Ser-2992 the chain carries O-(pantetheine 4'-phosphoryl)serine. Condensation regions lie at residues 3049–3464 (VALA…FTFP) and 3520–3889 (SGYV…EQLV). The interval 3914–4304 (HNSRQAVCAW…VGRKDNQIKF (391 aa)) is adenylation 4. One can recognise a Carrier 4 domain in the interval 4438–4514 (MPSTAAERKM…DLSDQAKSLI (77 aa)). Residue Ser-4475 is modified to O-(pantetheine 4'-phosphoryl)serine. Residues 4551–4878 (DVLPTTSFQH…LQTIVQHQNN (328 aa)) are condensation 5.

This sequence belongs to the NRP synthetase family.

It functions in the pathway secondary metabolite biosynthesis. Functionally, nonribosomal peptide synthetase; part of the gene cluster that mediates the biosynthesis of malformins, cyclic pentapeptides with a disulfide bond between 2 consecutive cysteins, that show potential anti-tumor as well as antimalarial and antitrypanosomal properties. The nonribosomal peptide synthetase mlfA is responsible of the formation of the cyclic pentapeptide. The malformin biosynthesis clusters in malformin-producing fungi also contain enzymes involved in the formation of the disulfide bond between the two consecutive cysteins within malformins, in addition to additional tailoring enzymes such as methyltransferases or oxidoreductases. They are also composed of up to 4 major facilitator superfamily transporters, and transcription factors probably involved in the regulation of the expression of those clusters. This is Malformin synthetase mlfA from Aspergillus neoniger (strain CBS 115656).